We begin with the raw amino-acid sequence, 934 residues long: LPS-assembly protein LptD (934 aa).

The N-terminal stretch at 1–33 is a signal peptide; it reads MALKSPAFRRKFPLLVTGGLLALQPFATSYVVA. Residues 52 to 86 form a disordered region; sequence KSPVNNLPPRPVHDGAALTSGTEAPSAEAESADKP.

This sequence belongs to the LptD family. As to quaternary structure, component of the lipopolysaccharide transport and assembly complex. Interacts with LptE and LptA.

The protein localises to the cell outer membrane. Its function is as follows. Together with LptE, is involved in the assembly of lipopolysaccharide (LPS) at the surface of the outer membrane. The polypeptide is LPS-assembly protein LptD (Pseudomonas putida (strain W619)).